The following is a 387-amino-acid chain: Ferrochelatase (387 aa).

A ferrochelatase region spans residues 1–318; it reads MGRVGVLLLN…VFIDALAQMV (318 aa). Fe cation is bound by residues H196 and E277. A hlip domain region spans residues 319 to 387; sequence MDSLNDPPCT…QGPLHFVGLL (69 aa).

This sequence in the N-terminal section; belongs to the ferrochelatase family. In the C-terminal section; belongs to the Hlip family.

Its subcellular location is the cytoplasm. The enzyme catalyses heme b + 2 H(+) = protoporphyrin IX + Fe(2+). Its pathway is porphyrin-containing compound metabolism; protoheme biosynthesis; protoheme from protoporphyrin-IX: step 1/1. Functionally, catalyzes the ferrous insertion into protoporphyrin IX. The Hlip proteins might regulate tetrapyrrole biosynthesis, maybe at the level of aminolevulinic acid synthesis. Deletion of 4 to 5 members of the Hlip family (always including this member) suggests the proteins are involved in regulation of chlorophyll biosynthesis, in stabilization of chlorophyll-binding proteins and/or in reuse of chlorophylls, and may regulate tetrapyrrole biosynthesis. The Hlip proteins probably stabilize PSII assembly intermediates. In Synechocystis sp. (strain ATCC 27184 / PCC 6803 / Kazusa), this protein is Ferrochelatase.